The following is a 400-amino-acid chain: Enoyl-[acyl-carrier-protein] reductase [NADH] (400 aa).

NAD(+) is bound by residues 74–75, 111–112, and 139–140; these read FE, DA, and VA. Tyrosine 225 contributes to the substrate binding site. Tyrosine 235 functions as the Proton donor in the catalytic mechanism. NAD(+)-binding positions include lysine 244 and 273-275; that span reads VVT.

The protein belongs to the TER reductase family. Monomer.

The enzyme catalyses a 2,3-saturated acyl-[ACP] + NAD(+) = a (2E)-enoyl-[ACP] + NADH + H(+). Its pathway is lipid metabolism; fatty acid biosynthesis. Involved in the final reduction of the elongation cycle of fatty acid synthesis (FAS II). Catalyzes the reduction of a carbon-carbon double bond in an enoyl moiety that is covalently linked to an acyl carrier protein (ACP). The sequence is that of Enoyl-[acyl-carrier-protein] reductase [NADH] from Psychromonas ingrahamii (strain DSM 17664 / CCUG 51855 / 37).